We begin with the raw amino-acid sequence, 218 residues long: Deoxyribose-phosphate aldolase (218 aa).

The active-site Proton donor/acceptor is the D89. K152 serves as the catalytic Schiff-base intermediate with acetaldehyde. K182 (proton donor/acceptor) is an active-site residue.

This sequence belongs to the DeoC/FbaB aldolase family. DeoC type 1 subfamily.

The protein localises to the cytoplasm. The catalysed reaction is 2-deoxy-D-ribose 5-phosphate = D-glyceraldehyde 3-phosphate + acetaldehyde. It participates in carbohydrate degradation; 2-deoxy-D-ribose 1-phosphate degradation; D-glyceraldehyde 3-phosphate and acetaldehyde from 2-deoxy-alpha-D-ribose 1-phosphate: step 2/2. In terms of biological role, catalyzes a reversible aldol reaction between acetaldehyde and D-glyceraldehyde 3-phosphate to generate 2-deoxy-D-ribose 5-phosphate. The chain is Deoxyribose-phosphate aldolase from Kocuria rhizophila (strain ATCC 9341 / DSM 348 / NBRC 103217 / DC2201).